Here is a 1040-residue protein sequence, read N- to C-terminus: BEM1-interacting protein 2 (1040 aa).

The disordered stretch occupies residues 1-39 (MSNDREVPTLSQLNTTVSRDKDVSDTLSPDFDSKGSATG). The span at 8–17 (PTLSQLNTTV) shows a compositional bias: polar residues. 3 positions are modified to phosphoserine: serine 18, serine 24, and serine 28. The SH3 domain maps to 43 to 107 (GNFPMYIAIN…PVVFTQKITV (65 aa)). The region spanning 266–330 (WSPEEITAYF…FKEIEKIKEA (65 aa)) is the SAM domain. 3 disordered regions span residues 365-412 (YRGH…SQEA), 437-478 (VSPR…WQSP), and 491-744 (IDQY…ARPV). A compositionally biased stretch (polar residues) spans 372–397 (TSQSLEDLPSQQNFIPTPRNTRNSSA). A compositionally biased stretch (pro residues) spans 444–457 (KPPSYPSPAQPPKS). Serine 450 is modified (phosphoserine). The segment covering 459-478 (LLNNTRTSPSPAQLYSWQSP) has biased composition (polar residues). Positions 495–505 (SSSDSNFNSRS) are enriched in low complexity. 3 positions are modified to phosphoserine: serine 519, serine 523, and serine 546. Positions 557–570 (SSDRKSSCSSHEEE) are enriched in basic and acidic residues. Over residues 573 to 598 (QETMNTFERPTSSIYADGSTIASISN) the composition is skewed to polar residues. Over residues 600–609 (KLAHEKEGKK) the composition is skewed to basic and acidic residues. A compositionally biased stretch (low complexity) spans 632 to 648 (LKRSSSASRTSSFKKSS). Serine 652 is subject to Phosphoserine. Positions 654–684 (FRQQFTDNAARSSSPEENPITSMPSEKNSSP) are enriched in polar residues. The segment covering 690–701 (SSKKSRSKRRSV) has biased composition (basic residues). Positions 702–732 (SAKEAEIFTETVKDDKNKRSASEAIKGETLK) are enriched in basic and acidic residues. The region spanning 768–887 (DADFSGWMSK…WMAALIKTTI (120 aa)) is the PH domain. Residues 943–957 (QLQQQQHDNNQGQAD) are compositionally biased toward low complexity. Disordered stretches follow at residues 943–986 (QLQQ…NNTT) and 1007–1040 (VARN…TDKI). The span at 973–986 (TISTPNLSSANNTT) shows a compositional bias: polar residues. Residues 1015 to 1024 (GTEKKGKFST) are compositionally biased toward basic and acidic residues.

As to quaternary structure, interacts with BEM1. Interacts with TOS7.

Its subcellular location is the bud. The protein localises to the bud neck. In terms of biological role, protein involved in bud formation. Functions redundantly with BOI1 to promote the fusion of secretory vesicles with the plasma membrane at sites of polarized growth. Acts as an abscission inhibitor during cytokinesis in response to chromatin bridges. This chain is BEM1-interacting protein 2, found in Saccharomyces cerevisiae (strain ATCC 204508 / S288c) (Baker's yeast).